The primary structure comprises 328 residues: Protein MGF 300-4L (328 aa).

It belongs to the asfivirus MGF 300 family.

The protein is Protein MGF 300-4L of Ornithodoros (relapsing fever ticks).